A 242-amino-acid polypeptide reads, in one-letter code: Adenosylcobinamide-GDP ribazoletransferase (242 aa).

Helical transmembrane passes span 31-51 (LLFY…LSTA), 52-72 (LMGA…VLLS), 109-129 (IAVV…VALI), 134-154 (GAAL…LFLT), and 188-208 (ILIG…CFIG).

It belongs to the CobS family. It depends on Mg(2+) as a cofactor.

It localises to the cell inner membrane. It catalyses the reaction alpha-ribazole + adenosylcob(III)inamide-GDP = adenosylcob(III)alamin + GMP + H(+). The catalysed reaction is alpha-ribazole 5'-phosphate + adenosylcob(III)inamide-GDP = adenosylcob(III)alamin 5'-phosphate + GMP + H(+). It participates in cofactor biosynthesis; adenosylcobalamin biosynthesis; adenosylcobalamin from cob(II)yrinate a,c-diamide: step 7/7. Joins adenosylcobinamide-GDP and alpha-ribazole to generate adenosylcobalamin (Ado-cobalamin). Also synthesizes adenosylcobalamin 5'-phosphate from adenosylcobinamide-GDP and alpha-ribazole 5'-phosphate. The sequence is that of Adenosylcobinamide-GDP ribazoletransferase from Pseudomonas fluorescens (strain SBW25).